Here is a 96-residue protein sequence, read N- to C-terminus: UPF0235 protein Pfl01_5322 (96 aa).

The protein belongs to the UPF0235 family.

The polypeptide is UPF0235 protein Pfl01_5322 (Pseudomonas fluorescens (strain Pf0-1)).